Consider the following 55-residue polypeptide: Large ribosomal subunit protein bL33 (55 aa).

The protein belongs to the bacterial ribosomal protein bL33 family.

The polypeptide is Large ribosomal subunit protein bL33 (Agrobacterium fabrum (strain C58 / ATCC 33970) (Agrobacterium tumefaciens (strain C58))).